The primary structure comprises 66 residues: UPF0337 protein RPA4217 (66 aa).

The protein belongs to the UPF0337 (CsbD) family.

The sequence is that of UPF0337 protein RPA4217 from Rhodopseudomonas palustris (strain ATCC BAA-98 / CGA009).